The sequence spans 359 residues: tRNA/tmRNA (uracil-C(5))-methyltransferase (359 aa).

The S-adenosyl-L-methionine site is built by Gln-183, Tyr-211, Asn-216, Glu-232, and Asp-292. Cys-317 functions as the Nucleophile in the catalytic mechanism. Catalysis depends on Glu-351, which acts as the Proton acceptor.

Belongs to the class I-like SAM-binding methyltransferase superfamily. RNA M5U methyltransferase family. TrmA subfamily.

The catalysed reaction is uridine(54) in tRNA + S-adenosyl-L-methionine = 5-methyluridine(54) in tRNA + S-adenosyl-L-homocysteine + H(+). It carries out the reaction uridine(341) in tmRNA + S-adenosyl-L-methionine = 5-methyluridine(341) in tmRNA + S-adenosyl-L-homocysteine + H(+). Its function is as follows. Dual-specificity methyltransferase that catalyzes the formation of 5-methyluridine at position 54 (m5U54) in all tRNAs, and that of position 341 (m5U341) in tmRNA (transfer-mRNA). This Pseudomonas fluorescens (strain Pf0-1) protein is tRNA/tmRNA (uracil-C(5))-methyltransferase.